Consider the following 209-residue polypeptide: Uracil phosphoribosyltransferase (209 aa).

Residues R79, R104, and 131–139 (DPMLATGAS) each bind 5-phospho-alpha-D-ribose 1-diphosphate. Uracil contacts are provided by residues I194 and 199-201 (GDA). D200 is a 5-phospho-alpha-D-ribose 1-diphosphate binding site.

It belongs to the UPRTase family. Requires Mg(2+) as cofactor.

The enzyme catalyses UMP + diphosphate = 5-phospho-alpha-D-ribose 1-diphosphate + uracil. Its pathway is pyrimidine metabolism; UMP biosynthesis via salvage pathway; UMP from uracil: step 1/1. With respect to regulation, allosterically activated by GTP. Functionally, catalyzes the conversion of uracil and 5-phospho-alpha-D-ribose 1-diphosphate (PRPP) to UMP and diphosphate. The polypeptide is Uracil phosphoribosyltransferase (Staphylococcus haemolyticus (strain JCSC1435)).